The following is a 510-amino-acid chain: Catalase (510 aa).

The N-terminal stretch at 1–26 (MPLLNWSRHMVCLTAAGLITVPTVYA) is a signal peptide. Residues H78 and N150 contribute to the active site. Residue Y358 participates in heme binding. Residues 386 to 400 (NQDGALNTGHTTSGV) show a composition bias toward polar residues. The disordered stretch occupies residues 386 to 412 (NQDGALNTGHTTSGVNYEPSRLEPRPA).

The protein belongs to the catalase family. Requires heme as cofactor.

It localises to the periplasm. It carries out the reaction 2 H2O2 = O2 + 2 H2O. In terms of biological role, decomposes hydrogen peroxide into water and oxygen; serves to protect cells from the toxic effects of hydrogen peroxide. The chain is Catalase (katB) from Pseudomonas syringae pv. syringae.